The following is a 175-amino-acid chain: Protein GrpE (175 aa).

Residues 1–35 (MSEQKQEIENENAQNSENLQDDLQDNEKNETNELQ) are disordered. Positions 25–35 (DNEKNETNELQ) are enriched in basic and acidic residues.

This sequence belongs to the GrpE family. Homodimer.

It is found in the cytoplasm. Participates actively in the response to hyperosmotic and heat shock by preventing the aggregation of stress-denatured proteins, in association with DnaK and GrpE. It is the nucleotide exchange factor for DnaK and may function as a thermosensor. Unfolded proteins bind initially to DnaJ; upon interaction with the DnaJ-bound protein, DnaK hydrolyzes its bound ATP, resulting in the formation of a stable complex. GrpE releases ADP from DnaK; ATP binding to DnaK triggers the release of the substrate protein, thus completing the reaction cycle. Several rounds of ATP-dependent interactions between DnaJ, DnaK and GrpE are required for fully efficient folding. This Campylobacter jejuni (strain RM1221) protein is Protein GrpE.